A 218-amino-acid chain; its full sequence is Oxaloacetate decarboxylase, mitochondrial (218 aa).

The transit peptide at 1 to 18 (MNKFWETGRKIVAVGRNY) directs the protein to the mitochondrion. Positions 63, 65, and 94 each coordinate Mg(2+).

The protein belongs to the FAH family. In terms of assembly, homodimer. It depends on Mg(2+) as a cofactor. Mn(2+) serves as cofactor.

It is found in the mitochondrion. The protein localises to the cytoplasm. The protein resides in the cytosol. The enzyme catalyses a 3-acylpyruvate + H2O = a carboxylate + pyruvate + H(+). It catalyses the reaction acetylpyruvate + H2O = acetate + pyruvate + H(+). It carries out the reaction 3-fumarylpyruvate + H2O = fumarate + pyruvate + H(+). The catalysed reaction is oxaloacetate + H(+) = pyruvate + CO2. Its function is as follows. Mitochondrial protein that acts as an oxaloacetate decarboxylase (ODx), catalyzing the decarboxylation of oxaloacetate (OAA) to pyruvate and CO(2), and as such is likely a regulatory enzyme in the TCA cycle. Also displays acylpyruvase activity, being able to hydrolyze acetylpyruvate and fumarylpyruvate in vitro. This is Oxaloacetate decarboxylase, mitochondrial (fahd1) from Dictyostelium discoideum (Social amoeba).